Here is a 247-residue protein sequence, read N- to C-terminus: E3 SUMO-protein ligase NSE2 (247 aa).

Residue Met-1 is modified to N-acetylmethionine. Glycyl lysine isopeptide (Lys-Gly) (interchain with G-Cter in SUMO2) cross-links involve residues Lys-90 and Lys-107. A Phosphoserine modification is found at Ser-116. Residues Lys-125 and Lys-130 each participate in a glycyl lysine isopeptide (Lys-Gly) (interchain with G-Cter in SUMO2) cross-link. The SP-RING-type zinc finger occupies 154–240 (MDEDMIVTQS…LRRAIESHNK (87 aa)). Residues Cys-185, His-187, Cys-210, and Cys-215 each coordinate Zn(2+).

This sequence belongs to the NSE2 family. Component of the SMC5-SMC6 complex which consists at least of SMC5, SMC6, NSMCE2, NSMCE1, NSMCE4A or EID3 and NSMCE3. In terms of processing, sumoylated, possibly via autosumoylation.

It is found in the nucleus. Its subcellular location is the chromosome. It localises to the telomere. The protein resides in the PML body. The protein operates within protein modification; protein sumoylation. Its function is as follows. E3 SUMO-protein ligase component of the SMC5-SMC6 complex, a complex involved in DNA double-strand break repair by homologous recombination. Is not be required for the stability of the complex. The complex may promote sister chromatid homologous recombination by recruiting the SMC1-SMC3 cohesin complex to double-strand breaks. Acts as an E3 ligase mediating SUMO attachment to various proteins such as SMC6L1 and TSNAX, the shelterin complex subunits TERF1, TERF2, TINF2 and TERF2IP, RAD51AP1, and maybe the cohesin components RAD21 and STAG2. Required for recruitment of telomeres to PML nuclear bodies. Required for sister chromatid cohesion during prometaphase and mitotic progression. This is E3 SUMO-protein ligase NSE2 (Nsmce2) from Rattus norvegicus (Rat).